Consider the following 220-residue polypeptide: Adenylate kinase (220 aa).

10–15 (GAGKGT) contributes to the ATP binding site. Positions 30–59 (STGDMLRAAVKNCTPLGLKAKEIMDAGGLV) are NMP. AMP contacts are provided by residues Thr31, Arg36, 57–59 (GLV), 85–88 (GFPR), and Gln92. The tract at residues 126-163 (GRRTCPSCGKGFHVLFAPPRKAGVCDFCGADLVQRGDD) is LID. An ATP-binding site is contributed by Arg127. Zn(2+) is bound by residues Cys130, Cys133, Cys150, and Cys153. AMP contacts are provided by Arg160 and Arg171. Leu199 lines the ATP pocket.

It belongs to the adenylate kinase family. Monomer.

It is found in the cytoplasm. The catalysed reaction is AMP + ATP = 2 ADP. It participates in purine metabolism; AMP biosynthesis via salvage pathway; AMP from ADP: step 1/1. Catalyzes the reversible transfer of the terminal phosphate group between ATP and AMP. Plays an important role in cellular energy homeostasis and in adenine nucleotide metabolism. This is Adenylate kinase from Pelobacter propionicus (strain DSM 2379 / NBRC 103807 / OttBd1).